We begin with the raw amino-acid sequence, 294 residues long: Lysozyme M1 (294 aa).

One can recognise a Ch-type lysozyme domain in the interval 81-294 (GVQGIDVSHW…RLLALANNTA (214 aa)). Active-site residues include Asp86, Asp175, and Glu177. The cysteines at positions 185 and 224 are disulfide-linked.

It belongs to the glycosyl hydrolase 25 family.

It localises to the secreted. The enzyme catalyses Hydrolysis of (1-&gt;4)-beta-linkages between N-acetylmuramic acid and N-acetyl-D-glucosamine residues in a peptidoglycan and between N-acetyl-D-glucosamine residues in chitodextrins.. This enzyme has both lysozyme (acetylmuramidase) and diacetylmuramidase activities. The polypeptide is Lysozyme M1 (acm) (Streptomyces globisporus).